The chain runs to 149 residues: UPF0178 protein CPF_2548 (149 aa).

The protein belongs to the UPF0178 family.

This is UPF0178 protein CPF_2548 from Clostridium perfringens (strain ATCC 13124 / DSM 756 / JCM 1290 / NCIMB 6125 / NCTC 8237 / Type A).